The chain runs to 32 residues: Ranatuerin-2La (32 aa).

A disulfide bridge links C27 with C32.

In terms of tissue distribution, expressed by the skin glands.

The protein localises to the secreted. Functionally, antibacterial activity against Gram-positive bacterium S.aureus and Gram-negative bacterium E.coli. Weak activity against C.albicans. In Rana luteiventris (Columbia spotted frog), this protein is Ranatuerin-2La.